Reading from the N-terminus, the 488-residue chain is Cardiolipin synthase 2 (488 aa).

Transmembrane regions (helical) follow at residues 8-28 (IIINILLVSAFLLNLVFAFII) and 39-59 (IWAWLLVLVFLPLVGFILYLL). PLD phosphodiesterase domains are found at residues 223 to 250 (MNNRNHRKIVVIDGTIGYVGGFNVGDEY) and 401 to 428 (DNGFLHSKTLVIDDEVASVGTANMDNRS). Residues His-228, Lys-230, Asp-235, His-406, Lys-408, and Asp-413 contribute to the active site.

The protein belongs to the phospholipase D family. Cardiolipin synthase subfamily.

The protein resides in the cell membrane. The catalysed reaction is 2 a 1,2-diacyl-sn-glycero-3-phospho-(1'-sn-glycerol) = a cardiolipin + glycerol. Functionally, catalyzes the reversible phosphatidyl group transfer from one phosphatidylglycerol molecule to another to form cardiolipin (CL) (diphosphatidylglycerol) and glycerol. This Staphylococcus epidermidis (strain ATCC 35984 / DSM 28319 / BCRC 17069 / CCUG 31568 / BM 3577 / RP62A) protein is Cardiolipin synthase 2 (cls2).